A 1818-amino-acid chain; its full sequence is Cytadherence high molecular weight protein 2 (1818 aa).

Coiled coils occupy residues 31–880 (LESA…KQRE), 919–1607 (ELKI…DNKH), 1644–1755 (HLFE…QAVQ), and 1786–1817 (LATQ…QKAA).

Post-translationally, phosphorylated mainly on serine residues.

Component of the cytoskeleton-like structure which stabilizes the shape of the wall-less Mycoplasma. This cytoskeleton-like network of accessory proteins containing HMW proteins 1 to 5 allows the proper anchoring of cytadhesin proteins in the mycoplasmal membrane at the attachment organelle. The sequence is that of Cytadherence high molecular weight protein 2 (hmw2) from Mycoplasma pneumoniae (strain ATCC 29342 / M129 / Subtype 1) (Mycoplasmoides pneumoniae).